The sequence spans 676 residues: Protein cereblon (676 aa).

The segment covering 1–11 (MDDEETAEIDE) has biased composition (acidic residues). 3 disordered regions span residues 1–78 (MDDE…TTAH), 118–194 (EDAG…AVPR), and 249–276 (DDANNADVINTVPDDTSEASPPPPLDVD). 2 stretches are compositionally biased toward low complexity: residues 12–33 (TSSSSTNTNTNATAMATATETA) and 125–139 (VPQNPTVATNTTPPA). The span at 156-177 (LVNNDSPSQASISSRHSGSDMS) shows a compositional bias: polar residues. The Lon N-terminal domain maps to 314-542 (RMLIFMHQHI…IIGTTLKHES (229 aa)). The region spanning 541–650 (ESLFYCRYCN…LAGSSVRIGK (110 aa)) is the CULT domain. Residues C546, C549, C615, and C618 each coordinate Zn(2+).

This sequence belongs to the CRBN family. Likely a component of a DCX (DDB1-CUL4-X-box) protein ligase complex. May interact with pic/DDB1. In terms of processing, ubiquitinated.

It is found in the nucleus. The protein operates within protein modification; protein ubiquitination. In terms of biological role, substrate recognition component of a DCX (DDB1-CUL4-X-box) E3 protein ligase complex that mediates the ubiquitination and subsequent proteasomal degradation of target proteins. Has an essential role in mediating growth by negatively regulating insulin signaling. It also has a role in maintaining presynaptic function in the neuromuscular junction synapses of third-instar larvae. The polypeptide is Protein cereblon (Drosophila mojavensis (Fruit fly)).